A 62-amino-acid chain; its full sequence is Photosystem II reaction center protein Z (62 aa).

The next 2 helical transmembrane spans lie at 8-28 (ALFAFIVVSFLLVVGVPVVLA) and 41-61 (FSGIGIWFLLVFLVGILNSFV).

The protein belongs to the PsbZ family. As to quaternary structure, PSII is composed of 1 copy each of membrane proteins PsbA, PsbB, PsbC, PsbD, PsbE, PsbF, PsbH, PsbI, PsbJ, PsbK, PsbL, PsbM, PsbT, PsbY, PsbZ, Psb30/Ycf12, at least 3 peripheral proteins of the oxygen-evolving complex and a large number of cofactors. It forms dimeric complexes.

The protein localises to the plastid. It is found in the chloroplast thylakoid membrane. In terms of biological role, may control the interaction of photosystem II (PSII) cores with the light-harvesting antenna, regulates electron flow through the 2 photosystem reaction centers. PSII is a light-driven water plastoquinone oxidoreductase, using light energy to abstract electrons from H(2)O, generating a proton gradient subsequently used for ATP formation. This Chlorella vulgaris (Green alga) protein is Photosystem II reaction center protein Z.